A 389-amino-acid polypeptide reads, in one-letter code: Protein Wnt-10b (389 aa).

The signal sequence occupies residues 1–28 (MLEEPRPRPPPSGLAGLLFLALCSRALS). Position 46 is a phosphothreonine (T46). Disulfide bonds link C83/C94, C136/C144, C146/C199, C247/C261, C249/C256, C318/C349, C334/C344, C348/C388, C364/C379, C366/C376, and C371/C372. N93 carries an N-linked (GlcNAc...) asparagine glycan. The segment at 171-197 (KSFPHSLPSPGPGSSPSPGPQDTWEWG) is disordered. Residues 177 to 189 (LPSPGPGSSPSPG) show a composition bias toward pro residues. S253 carries O-palmitoleoyl serine; by PORCN lipidation. N335 carries an N-linked (GlcNAc...) asparagine glycan.

It belongs to the Wnt family. As to quaternary structure, forms a soluble 1:1 complex with AFM; this prevents oligomerization and is required for prolonged biological activity. The complex with AFM may represent the physiological form in body fluids. Post-translationally, palmitoleoylation is required for efficient binding to frizzled receptors. Depalmitoleoylation leads to Wnt signaling pathway inhibition. As to expression, detected in most adult tissues. Highest levels were found in heart and skeletal muscle. Low levels are found in brain.

It is found in the secreted. The protein resides in the extracellular space. Its subcellular location is the extracellular matrix. Member of the Wnt ligand gene family that encodes for secreted proteins, which activate the Wnt signaling cascade. Specifically activates canonical Wnt/beta-catenin signaling and thus triggers beta-catenin/LEF/TCF-mediated transcriptional programs. Involved in signaling networks controlling stemness, pluripotency and cell fate decisions. Acts in the immune system, mammary gland, adipose tissue, bone and skin. This Homo sapiens (Human) protein is Protein Wnt-10b (WNT10B).